Here is a 606-residue protein sequence, read N- to C-terminus: Zinc finger protein 652 (606 aa).

A Phosphoserine modification is found at serine 57. The span at 71 to 97 (HLHETEEQPYFRETRAVSDVHAVKEDR) shows a compositional bias: basic and acidic residues. 2 disordered regions span residues 71–113 (HLHE…VSYK) and 130–235 (VSKG…APVQ). A compositionally biased stretch (acidic residues) spans 98–109 (ENSDDTEEEEEE). Phosphoserine is present on serine 100. Threonine 103 is subject to Phosphothreonine. The segment covering 137-149 (VSSQSKETPVLKT) has biased composition (polar residues). Over residues 152–170 (EEEEEESEEEATDDSNDYG) the composition is skewed to acidic residues. The segment covering 171 to 183 (ENEKQKKKEKIVE) has biased composition (basic and acidic residues). Over residues 184–209 (KVSVTQRRTRRAASVAAATTSPTPRT) the composition is skewed to low complexity. Serine 197 and serine 204 each carry phosphoserine. A C2H2-type 1 zinc finger spans residues 245 to 268 (LTCEKCPRVFNTRWYLEKHMNVTH). The C2H2-type 2; degenerate zinc-finger motif lies at 272–294 (QICDKCGKKFVLESELSLHQQTD). 6 consecutive C2H2-type zinc fingers follow at residues 299-322 (IQCV…KIVH), 329-351 (FSCE…MVAH), 357-379 (FTCE…SLQH), 385-407 (FRCE…MSIH), 413-435 (FMCQ…MKTH), and 441-463 (FICE…RRTH). The C2H2-type 9; degenerate zinc finger occupies 469–492 (YPCDVCGQRFRFSNMLKAHKEKCF). Residues 498-606 (VNVPPAVQIP…AEKNSSAQHH (109 aa)) form a mediates interaction with CBFA2T3 region.

It belongs to the krueppel C2H2-type zinc-finger protein family. As to quaternary structure, interacts with CBFA2T3. In terms of tissue distribution, widely expressed with higher expression in breast, prostate, vulva and pancreas.

It localises to the nucleus. Functionally, functions as a transcriptional repressor. This is Zinc finger protein 652 (ZNF652) from Homo sapiens (Human).